The sequence spans 392 residues: Ribosomal RNA large subunit methyltransferase G (392 aa).

Belongs to the methyltransferase superfamily. RlmG family.

It is found in the cytoplasm. It catalyses the reaction guanosine(1835) in 23S rRNA + S-adenosyl-L-methionine = N(2)-methylguanosine(1835) in 23S rRNA + S-adenosyl-L-homocysteine + H(+). Specifically methylates the guanine in position 1835 (m2G1835) of 23S rRNA. In Colwellia psychrerythraea (strain 34H / ATCC BAA-681) (Vibrio psychroerythus), this protein is Ribosomal RNA large subunit methyltransferase G.